Here is a 132-residue protein sequence, read N- to C-terminus: Small ribosomal subunit protein uS13 (132 aa).

The interval 106 to 132 (PVRGQVTQKNARTRKGPRKTVAGKKGK) is disordered. A compositionally biased stretch (basic residues) spans 116–132 (ARTRKGPRKTVAGKKGK).

The protein belongs to the universal ribosomal protein uS13 family. Part of the 30S ribosomal subunit. Forms a loose heterodimer with protein S19. Forms two bridges to the 50S subunit in the 70S ribosome.

Located at the top of the head of the 30S subunit, it contacts several helices of the 16S rRNA. In the 70S ribosome it contacts the 23S rRNA (bridge B1a) and protein L5 of the 50S subunit (bridge B1b), connecting the 2 subunits; these bridges are implicated in subunit movement. Contacts the tRNAs in the A and P-sites. The sequence is that of Small ribosomal subunit protein uS13 from Mycoplasmopsis pulmonis (strain UAB CTIP) (Mycoplasma pulmonis).